A 660-amino-acid polypeptide reads, in one-letter code: MRADRQSTAKLRPSLHAVIQTGNLNAFNFTVEGVDCPTPADLSRYCVANGWFFKIGNQVIIPVLRNFPAFNYNTDIGRFTSFPFETLEDVTKLHDLANGDLVPHFAFVEDGSPVVAAICDRHDNVVTLRFRDSGGRIITVEELLAGEQRDLNLYQGLDQLADEAGIRPEDIDQAALAAQAVADAGGGVAQQQAAAAAAGVQAQEDLPVGREDELRPEDVADARGQAAAPPQAQAPAPPDAALQRQREQAILRQVPNLHVLPQPRQQLIDRLAQVREAEQKFINEMIQEVGVIEQQRDVAAAGMRLELCRSVHRVDGILRAYQERVNPFRLGLNYRPPILLEEEIRVEENARRLGGEIGLHDFEIAERPERALLHAEYLGNLMHVEQEKLLTTGRTFVAHIHQAGYCNPEGWCCLQDVEVQVQGIEPESLLPALAVRTNCRGLVLRAPLPIIRVLTQIIHHPSGLDRLEATLNVLLTDMRERVSTLTTADSTRRIRVNDAHDLAAMTAPLGHVYAMLSRWRDNVARLRASAQHQLIAQELARKYAEWRPGQHYTIPGRVLNLFANRQLRYQSQLEWVYPHLWIADRNLAGAWILNGVVPTYRNLGEWVPDIAFIGLVQFLEFWEEFVTWFPHYGVGPINRGVPVFPTVFSPRMSSLAVRLL.

Residues 220 to 239 (ADARGQAAAPPQAQAPAPPD) form a disordered region. Residues 222–239 (ARGQAAAPPQAQAPAPPD) are compositionally biased toward low complexity.

This is an uncharacterized protein from Callospermophilus lateralis (Golden-mantled ground squirrel).